A 287-amino-acid chain; its full sequence is 4-hydroxybenzoate octaprenyltransferase (287 aa).

Helical transmembrane passes span 21 to 41 (VGIF…AKGA), 44 to 64 (FKIA…GCIV), 91 to 111 (VTEA…LVLL), 112 to 132 (LNRL…VYPF), 139 to 159 (LPQL…FAAT), 160 to 180 (VGHV…WPIV), 211 to 231 (LMIG…GWYL), 235 to 255 (YWFY…QFLI), and 263 to 283 (CFAA…GILL).

This sequence belongs to the UbiA prenyltransferase family. Mg(2+) is required as a cofactor.

The protein localises to the cell inner membrane. The enzyme catalyses all-trans-octaprenyl diphosphate + 4-hydroxybenzoate = 4-hydroxy-3-(all-trans-octaprenyl)benzoate + diphosphate. It functions in the pathway cofactor biosynthesis; ubiquinone biosynthesis. Its function is as follows. Catalyzes the prenylation of para-hydroxybenzoate (PHB) with an all-trans polyprenyl group. Mediates the second step in the final reaction sequence of ubiquinone-8 (UQ-8) biosynthesis, which is the condensation of the polyisoprenoid side chain with PHB, generating the first membrane-bound Q intermediate 3-octaprenyl-4-hydroxybenzoate. The polypeptide is 4-hydroxybenzoate octaprenyltransferase (Coxiella burnetii (strain CbuG_Q212) (Coxiella burnetii (strain Q212))).